Consider the following 105-residue polypeptide: Nucleoid-associated protein lin2851 (105 aa).

Residues 1 to 16 (MRGMGNMQGMMKQMQK) are compositionally biased toward low complexity. The tract at residues 1-23 (MRGMGNMQGMMKQMQKMQKEMAK) is disordered.

The protein belongs to the YbaB/EbfC family. Homodimer.

It is found in the cytoplasm. Its subcellular location is the nucleoid. Its function is as follows. Binds to DNA and alters its conformation. May be involved in regulation of gene expression, nucleoid organization and DNA protection. This Listeria innocua serovar 6a (strain ATCC BAA-680 / CLIP 11262) protein is Nucleoid-associated protein lin2851.